The primary structure comprises 86 residues: Apolipoprotein C-I (86 aa).

An N-terminal signal peptide occupies residues 1-26 (MRLFLSLPVLVVVLLMILEGPGPAQG).

It belongs to the apolipoprotein C1 family.

It localises to the secreted. Inhibitor of lipoprotein binding to the low density lipoprotein (LDL) receptor, LDL receptor-related protein, and very low density lipoprotein (VLDL) receptor. Associates with high density lipoproteins (HDL) and the triacylglycerol-rich lipoproteins in the plasma and makes up about 10% of the protein of the VLDL and 2% of that of HDL. Appears to interfere directly with fatty acid uptake and is also the major plasma inhibitor of cholesteryl ester transfer protein (CETP). Binds free fatty acids and reduces their intracellular esterification. Modulates the interaction of APOE with beta-migrating VLDL and inhibits binding of beta-VLDL to the LDL receptor-related protein. In Ateles geoffroyi (Black-handed spider monkey), this protein is Apolipoprotein C-I (APOC1).